The primary structure comprises 208 residues: Vacuolar ATPase assembly protein VMA12 (208 aa).

An N-acetylalanine modification is found at alanine 2. 2 helical membrane-spanning segments follow: residues 146–166 (LVIT…CTYL) and 179–199 (VLAA…VMVR).

As to quaternary structure, accessory component of the multisubunit proton-transporting vacuolar (V)-ATPase protein pump.

Its subcellular location is the cytoplasmic vesicle. It is found in the COPI-coated vesicle membrane. The protein localises to the endoplasmic reticulum-Golgi intermediate compartment membrane. The protein resides in the endoplasmic reticulum membrane. Accessory component of the proton-transporting vacuolar (V)-ATPase protein pump involved in intracellular iron homeostasis. In aerobic conditions, required for intracellular iron homeostasis, thus triggering the activity of Fe(2+) prolyl hydroxylase (PHD) enzymes, and leading to HIF1A hydroxylation and subsequent proteasomal degradation. Necessary for endolysosomal acidification and lysosomal degradation. May be involved in Golgi homeostasis. Binds 20(S)-hydroxycholesterol (20(S)-OHC). This is Vacuolar ATPase assembly protein VMA12 from Homo sapiens (Human).